A 309-amino-acid polypeptide reads, in one-letter code: Probable inactive poly [ADP-ribose] polymerase SRO5 (309 aa).

Positions 28–255 constitute a PARP catalytic domain; sequence CDSSSDRSFA…AFPVLIKALS (228 aa). One can recognise an RST domain in the interval 238-309; sequence KRLRSPWMAF…IKACGHKVQH (72 aa).

In terms of assembly, interacts with dehydration-responsive DREB2 proteins and a number of transcription factors belonging to several protein families.

It localises to the nucleus matrix. In terms of biological role, probable inactive ADP-ribosyltransferase that may be involved in stress and developmental responses. The protein is Probable inactive poly [ADP-ribose] polymerase SRO5 (SRO5) of Arabidopsis thaliana (Mouse-ear cress).